Reading from the N-terminus, the 536-residue chain is CTP synthase (536 aa).

Residues 1-267 (MSKFVFVTGG…CKETLNYLEL (267 aa)) are amidoligase domain. Serine 13 is a binding site for CTP. Serine 13 lines the UTP pocket. Residues 14–19 (SIGKGI) and aspartate 71 contribute to the ATP site. Positions 71 and 141 each coordinate Mg(2+). CTP is bound by residues 148-150 (DIE), 188-193 (KTKPTQ), and lysine 224. UTP-binding positions include 188–193 (KTKPTQ) and lysine 224. One can recognise a Glutamine amidotransferase type-1 domain in the interval 292–534 (KVALVGKYIE…IKASQDKLTQ (243 aa)). Position 354 (glycine 354) interacts with L-glutamine. Cysteine 381 acts as the Nucleophile; for glutamine hydrolysis in catalysis. Residues 382-385 (LGMQ), glutamate 405, and arginine 462 each bind L-glutamine. Catalysis depends on residues histidine 507 and glutamate 509.

The protein belongs to the CTP synthase family. In terms of assembly, homotetramer.

It catalyses the reaction UTP + L-glutamine + ATP + H2O = CTP + L-glutamate + ADP + phosphate + 2 H(+). The catalysed reaction is L-glutamine + H2O = L-glutamate + NH4(+). It carries out the reaction UTP + NH4(+) + ATP = CTP + ADP + phosphate + 2 H(+). Its pathway is pyrimidine metabolism; CTP biosynthesis via de novo pathway; CTP from UDP: step 2/2. Allosterically activated by GTP, when glutamine is the substrate; GTP has no effect on the reaction when ammonia is the substrate. The allosteric effector GTP functions by stabilizing the protein conformation that binds the tetrahedral intermediate(s) formed during glutamine hydrolysis. Inhibited by the product CTP, via allosteric rather than competitive inhibition. Catalyzes the ATP-dependent amination of UTP to CTP with either L-glutamine or ammonia as the source of nitrogen. Regulates intracellular CTP levels through interactions with the four ribonucleotide triphosphates. The sequence is that of CTP synthase from Prochlorococcus marinus (strain MIT 9301).